The following is a 579-amino-acid chain: SLAIN motif-containing protein 1 (579 aa).

6 disordered regions span residues 1-21 (MMAEQVKCASPVAASGAGPGP), 60-95 (LLLQPPPPSAPPPAGACSPLATHRAPASTTSPGPGA), 135-162 (GGGGSPEPGTAGTPPGEAATPPLPPPTL), 233-258 (YTSRGSPLSPQSSIDSELSTSELEDD), 289-313 (STSASVSRNSSSVSLSSGKKGTCSD), and 347-454 (IPHS…PGQI). Positions 9 to 21 (ASPVAASGAGPGP) are enriched in low complexity. Positions 21 to 56 (PVVNAELEVKKLQELVRKLEKQNEQLRSRAASAAAA) form a coiled coil. Residues 63 to 73 (QPPPPSAPPPA) show a composition bias toward pro residues. The span at 141-154 (EPGTAGTPPGEAAT) shows a compositional bias: low complexity. Positions 233–243 (YTSRGSPLSPQ) are enriched in polar residues. Position 241 is a phosphoserine (S241). Low complexity-rich tracts occupy residues 244–253 (SSIDSELSTS) and 289–305 (STSASVSRNSSSVSLSS). The segment covering 362-373 (SPSTQYFPSNNF) has biased composition (polar residues). A compositionally biased stretch (low complexity) spans 374–390 (QQPQYYPPQAQTADQQP). Polar residues predominate over residues 412-432 (AAASSNLSSPVTVRSSQSFDS). R469 carries the asymmetric dimethylarginine modification. The tract at residues 479–516 (SPTVQGSSSSGSSGSSGGSGSGMPLSNGTQLYSTTGIP) is disordered. The segment covering 502 to 516 (PLSNGTQLYSTTGIP) has biased composition (polar residues). At R554 the chain carries Asymmetric dimethylarginine.

Belongs to the SLAIN motif-containing family. In terms of assembly, interacts with MAPRE1, MAPRE2, MAPRE3 and CKAP5. Interacts with ZDHHC17 (via ANK repeats). As to expression, expressed in embryonic stem cells. Expressed in adult bone marrow, brain, kidney, lung, testis and thymus. Expressed in colon. Isoform 1 is highly expressed in brain. Isoform 2 is more widely expressed in bone marrow, brain, colon, kidney, lung and thymus.

Its subcellular location is the cytoplasm. It localises to the cytoskeleton. In terms of biological role, microtubule plus-end tracking protein that might be involved in the regulation of cytoplasmic microtubule dynamics, microtubule organization and microtubule elongation. This Mus musculus (Mouse) protein is SLAIN motif-containing protein 1 (Slain1).